The following is a 453-amino-acid chain: Pentatricopeptide repeat-containing protein At2g38420, mitochondrial (453 aa).

The transit peptide at 1–77 (MARSSSWHRM…CEPTPQAYRF (77 aa)) directs the protein to the mitochondrion. PPR repeat units follow at residues 107–141 (PESI…RCVP), 142–177 (SAYT…GVRL), 178–212 (EEST…SVIV), 213–249 (DPRL…RFSP), 250–284 (GLRD…RVEP), 285–319 (DLVC…GLAP), 320–354 (DVYT…GSEP), 355–389 (NVVT…GVNR), and 390–424 (NSHT…NVFV).

Belongs to the PPR family. P subfamily.

The protein localises to the mitochondrion. This is Pentatricopeptide repeat-containing protein At2g38420, mitochondrial from Arabidopsis thaliana (Mouse-ear cress).